A 247-amino-acid polypeptide reads, in one-letter code: DNA polymerase sliding clamp (247 aa).

The protein belongs to the PCNA family. In terms of assembly, homotrimer. The subunits circularize to form a toroid; DNA passes through its center. Replication factor C (RFC) is required to load the toroid on the DNA.

In terms of biological role, sliding clamp subunit that acts as a moving platform for DNA processing. Responsible for tethering the catalytic subunit of DNA polymerase and other proteins to DNA during high-speed replication. The protein is DNA polymerase sliding clamp of Natronomonas pharaonis (strain ATCC 35678 / DSM 2160 / CIP 103997 / JCM 8858 / NBRC 14720 / NCIMB 2260 / Gabara) (Halobacterium pharaonis).